Consider the following 184-residue polypeptide: Class II hydrophobin 6 (184 aa).

The N-terminal stretch at Met1 to Ala16 is a signal peptide. Disulfide bonds link Cys122–Cys169, Cys130–Cys160, Cys131–Cys143, and Cys170–Cys181.

It belongs to the cerato-ulmin hydrophobin family. As to quaternary structure, homotetramer. Further self-assembles to form highly ordered films at water-air interfaces through intermolecular interactions. Expressed in the mycellium.

It localises to the secreted. Aerial growth, conidiation, and dispersal of filamentous fungi in the environment rely upon a capability of their secreting small amphipathic proteins called hydrophobins (HPBs) with low sequence identity. Class I can self-assemble into an outermost layer of rodlet bundles on aerial cell surfaces, conferring cellular hydrophobicity that supports fungal growth, development and dispersal; whereas Class II form highly ordered films at water-air interfaces through intermolecular interactions but contribute nothing to the rodlet structure. Hcf-6 is a class II hydrophobin that is involved in adhesion and in tomato plants infection. Is secreted to form a coat both around and beneath the fungus. The sequence is that of Class II hydrophobin 6 from Passalora fulva (Tomato leaf mold).